The primary structure comprises 246 residues: Uroporphyrinogen-III synthase (246 aa).

It belongs to the uroporphyrinogen-III synthase family. Monomer.

The enzyme catalyses hydroxymethylbilane = uroporphyrinogen III + H2O. The protein operates within porphyrin-containing compound metabolism; protoporphyrin-IX biosynthesis; coproporphyrinogen-III from 5-aminolevulinate: step 3/4. Catalyzes cyclization of the linear tetrapyrrole, hydroxymethylbilane, to the macrocyclic uroporphyrinogen III. The protein is Uroporphyrinogen-III synthase (hemD) of Salmonella typhimurium (strain LT2 / SGSC1412 / ATCC 700720).